The chain runs to 370 residues: Protein RecA (370 aa).

The segment at 1–20 (MSFEERRKKDSKESSSKEKD) is disordered. 78–85 (GPESSGKT) contacts ATP.

This sequence belongs to the RecA family.

Its subcellular location is the cytoplasm. Functionally, can catalyze the hydrolysis of ATP in the presence of single-stranded DNA, the ATP-dependent uptake of single-stranded DNA by duplex DNA, and the ATP-dependent hybridization of homologous single-stranded DNAs. It interacts with LexA causing its activation and leading to its autocatalytic cleavage. This Prochlorococcus marinus (strain MIT 9515) protein is Protein RecA.